The chain runs to 342 residues: Anthranilate phosphoribosyltransferase (342 aa).

5-phospho-alpha-D-ribose 1-diphosphate contacts are provided by residues glycine 79, 82-83, threonine 87, 89-92, 107-115, and serine 119; these read GD, NIST, and KHCNQRISS. Glycine 79 contacts anthranilate. Serine 91 contacts Mg(2+). Position 110 (asparagine 110) interacts with anthranilate. Arginine 165 lines the anthranilate pocket. Aspartate 223 and glutamate 224 together coordinate Mg(2+).

The protein belongs to the anthranilate phosphoribosyltransferase family. In terms of assembly, homodimer. Mg(2+) serves as cofactor.

The enzyme catalyses N-(5-phospho-beta-D-ribosyl)anthranilate + diphosphate = 5-phospho-alpha-D-ribose 1-diphosphate + anthranilate. It participates in amino-acid biosynthesis; L-tryptophan biosynthesis; L-tryptophan from chorismate: step 2/5. In terms of biological role, catalyzes the transfer of the phosphoribosyl group of 5-phosphorylribose-1-pyrophosphate (PRPP) to anthranilate to yield N-(5'-phosphoribosyl)-anthranilate (PRA). In Buchnera aphidicola subsp. Acyrthosiphon pisum (strain 5A), this protein is Anthranilate phosphoribosyltransferase.